The following is a 73-amino-acid chain: Small ribosomal subunit protein bS18 (73 aa).

The protein belongs to the bacterial ribosomal protein bS18 family. Part of the 30S ribosomal subunit. Forms a tight heterodimer with protein bS6.

In terms of biological role, binds as a heterodimer with protein bS6 to the central domain of the 16S rRNA, where it helps stabilize the platform of the 30S subunit. This Neorickettsia sennetsu (strain ATCC VR-367 / Miyayama) (Ehrlichia sennetsu) protein is Small ribosomal subunit protein bS18.